Reading from the N-terminus, the 259-residue chain is Bisphosphoglycerate mutase (259 aa).

Ser2 bears the N-acetylserine mark. Substrate is bound by residues 10–17 (RHGEGAWN), 23–24 (CS), Arg62, 89–92 (ERHY), Arg100, and 116–117 (RR). The Tele-phosphohistidine intermediate role is filled by His11. Residue Glu89 is the Proton donor/acceptor of the active site. At Thr122 the chain carries Phosphothreonine. 189 to 190 (GN) contributes to the substrate binding site.

Belongs to the phosphoglycerate mutase family. BPG-dependent PGAM subfamily. As to quaternary structure, homodimer. In terms of tissue distribution, expressed in red blood cells.

It catalyses the reaction (2R)-3-phospho-glyceroyl phosphate = (2R)-2,3-bisphosphoglycerate + H(+). The enzyme catalyses (2R)-2-phosphoglycerate = (2R)-3-phosphoglycerate. At alkaline pH BPGM favors the synthase reaction; however, at lower pH the phosphatase reaction is dominant. Inhibited by citrate. In terms of biological role, plays a major role in regulating hemoglobin oxygen affinity by controlling the levels of its allosteric effector 2,3-bisphosphoglycerate (2,3-BPG). Also exhibits mutase (EC 5.4.2.11) activity. The chain is Bisphosphoglycerate mutase (BPGM) from Oryctolagus cuniculus (Rabbit).